The primary structure comprises 348 residues: NADH-ubiquinone oxidoreductase chain 2 (348 aa).

Helical transmembrane passes span 3 to 23 (PYVLMILLSSLGLGTTLTFAS), 60 to 80 (FLTQATAAAMILFASTTNAWM), 96 to 116 (TMFMTALALKIGLAPMHFWMP), 149 to 169 (IDPLLLTLLGVTSTLVGGWGG), 178 to 197 (ILAYSSIAHMGWMIIVIQYA), 202 to 219 (LLALGTYIIMTSAAFLTL), 246 to 266 (LVLLSLGGLPPLTGFMPKWLI), 274 to 294 (DLPIIATTMALAALISLYFYL), and 326 to 346 (LALFTMATLGLLPMTPAILTL).

It belongs to the complex I subunit 2 family.

The protein localises to the mitochondrion inner membrane. The catalysed reaction is a ubiquinone + NADH + 5 H(+)(in) = a ubiquinol + NAD(+) + 4 H(+)(out). Core subunit of the mitochondrial membrane respiratory chain NADH dehydrogenase (Complex I) that is believed to belong to the minimal assembly required for catalysis. Complex I functions in the transfer of electrons from NADH to the respiratory chain. The immediate electron acceptor for the enzyme is believed to be ubiquinone. This chain is NADH-ubiquinone oxidoreductase chain 2 (MT-ND2), found in Carassius auratus (Goldfish).